The following is a 575-amino-acid chain: Protein AUXIN SIGNALING F-BOX 2 (575 aa).

In terms of domain architecture, F-box spans 1-47 (MNYFPDEVIEHVFDFVTSHKDRNAISLVCKSWYKIERYSRQKVFIGN). 1D-myo-inositol hexakisphosphate is bound at residue Lys-69. The segment at 76-77 (DF) is interaction with auxin-responsive proteins. 1D-myo-inositol hexakisphosphate is bound by residues 108–109 (KR) and Arg-340. The tract at residues 343–348 (PSDLLG) is interaction with auxin-responsive proteins. Position 396 to 398 (396 to 398 (RFR)) interacts with 1D-myo-inositol hexakisphosphate. Residues 400-404 (CILEP) are interaction with auxin-responsive proteins. Position 431 (Arg-431) interacts with 1D-myo-inositol hexakisphosphate. The interaction with auxin-responsive proteins stretch occupies residues 459 to 460 (AF). Residues 479 to 480 (KK) and Arg-504 each bind 1D-myo-inositol hexakisphosphate.

As to quaternary structure, part of a SCF (SKP1-cullin-F-box) protein ligase complex. Interacts with Aux/IAA proteins (IAA7) in an auxin-dependent manner. As to expression, ubiquitous, with higher levels in seedlings.

The protein resides in the nucleus. It participates in protein modification; protein ubiquitination. Its function is as follows. Component of SCF(ASK-cullin-F-box) E3 ubiquitin ligase complexes, which may mediate the ubiquitination and subsequent proteasomal degradation of target proteins. Confers sensitivity to the virulent bacterial pathogen P.syringae. Auxin receptor that mediates Aux/IAA proteins proteasomal degradation and auxin-regulated transcription. Involved in embryogenesis regulation by auxin. The sequence is that of Protein AUXIN SIGNALING F-BOX 2 (AFB2) from Arabidopsis thaliana (Mouse-ear cress).